A 326-amino-acid polypeptide reads, in one-letter code: Eukaryotic translation initiation factor 3 subunit I (326 aa).

WD repeat units follow at residues 8–47 (GHERSITQIKYNREGDLLFSSSKDQKPNVWYSLNGERLGT), 50–89 (GHQGAVWCLDVDWESRKLITGAGDMTTKLWDVEYGTVIAS), 145–184 (MVESKITSMQWGPLDETIITGHDNGNIAIWDVRKGQKVVD), 188–227 (DHAAGINDMQLSKDGTMFVTASKDNTAKLFDAESLMCLKT), and 285–326 (GHFG…NIFE).

The protein belongs to the eIF-3 subunit I family. Component of the eukaryotic translation initiation factor 3 (eIF-3) complex. The eIF-3 complex interacts with pix.

It is found in the cytoplasm. In terms of biological role, component of the eukaryotic translation initiation factor 3 (eIF-3) complex, which is involved in protein synthesis of a specialized repertoire of mRNAs and, together with other initiation factors, stimulates binding of mRNA and methionyl-tRNAi to the 40S ribosome. The eIF-3 complex specifically targets and initiates translation of a subset of mRNAs involved in cell proliferation. The chain is Eukaryotic translation initiation factor 3 subunit I from Drosophila grimshawi (Hawaiian fruit fly).